The chain runs to 228 residues: NAD(P)H-hydrate epimerase (228 aa).

The YjeF N-terminal domain maps to 10–214 (AIDIDQELFN…DLERKYDLKI (205 aa)). Position 58–62 (58–62 (NNGGD)) interacts with (6S)-NADPHX. K(+)-binding residues include N59 and D123. Residues 127–133 (GFSFKPP) and D156 contribute to the (6S)-NADPHX site. S159 serves as a coordination point for K(+).

It belongs to the NnrE/AIBP family. Requires K(+) as cofactor.

The enzyme catalyses (6R)-NADHX = (6S)-NADHX. It carries out the reaction (6R)-NADPHX = (6S)-NADPHX. Functionally, catalyzes the epimerization of the S- and R-forms of NAD(P)HX, a damaged form of NAD(P)H that is a result of enzymatic or heat-dependent hydration. This is a prerequisite for the S-specific NAD(P)H-hydrate dehydratase to allow the repair of both epimers of NAD(P)HX. In Pediculus humanus subsp. corporis (Body louse), this protein is NAD(P)H-hydrate epimerase.